Here is a 168-residue protein sequence, read N- to C-terminus: Large ribosomal subunit protein bL9 (168 aa).

Positions glutamate 148–alanine 168 are disordered. The span at alanine 157–alanine 168 shows a compositional bias: low complexity.

The protein belongs to the bacterial ribosomal protein bL9 family.

Its function is as follows. Binds to the 23S rRNA. This chain is Large ribosomal subunit protein bL9, found in Herpetosiphon aurantiacus (strain ATCC 23779 / DSM 785 / 114-95).